The sequence spans 93 residues: Small ribosomal subunit protein uS17 (93 aa).

Belongs to the universal ribosomal protein uS17 family. As to quaternary structure, part of the 30S ribosomal subunit.

One of the primary rRNA binding proteins, it binds specifically to the 5'-end of 16S ribosomal RNA. In Rhodococcus jostii (strain RHA1), this protein is Small ribosomal subunit protein uS17.